We begin with the raw amino-acid sequence, 286 residues long: Homoserine kinase (286 aa).

78–88 lines the ATP pocket; that stretch reads PLARGLGSSSS.

It belongs to the GHMP kinase family. Homoserine kinase subfamily.

It localises to the cytoplasm. The enzyme catalyses L-homoserine + ATP = O-phospho-L-homoserine + ADP + H(+). It functions in the pathway amino-acid biosynthesis; L-threonine biosynthesis; L-threonine from L-aspartate: step 4/5. Its function is as follows. Catalyzes the ATP-dependent phosphorylation of L-homoserine to L-homoserine phosphate. In Streptococcus suis (strain 98HAH33), this protein is Homoserine kinase.